We begin with the raw amino-acid sequence, 294 residues long: Probable 2-(5''-triphosphoribosyl)-3'-dephosphocoenzyme-A synthase (294 aa).

The protein belongs to the CitG/MdcB family.

The catalysed reaction is 3'-dephospho-CoA + ATP = 2'-(5''-triphospho-alpha-D-ribosyl)-3'-dephospho-CoA + adenine. The chain is Probable 2-(5''-triphosphoribosyl)-3'-dephosphocoenzyme-A synthase from Streptococcus equi subsp. zooepidemicus (strain MGCS10565).